A 92-amino-acid chain; its full sequence is Large ribosomal subunit protein uL24c (92 aa).

This sequence belongs to the universal ribosomal protein uL24 family. Part of the 50S ribosomal subunit.

Its subcellular location is the plastid. It localises to the chloroplast. One of two assembly initiator proteins, it binds directly to the 5'-end of the 23S rRNA, where it nucleates assembly of the 50S subunit. In Gracilaria tenuistipitata var. liui (Red alga), this protein is Large ribosomal subunit protein uL24c (rpl24).